We begin with the raw amino-acid sequence, 364 residues long: MQERHTEQDYRALLIADTPIIDVRAPIEFEQGAMPAAINLPLMNNDERAAVGICYKQQGSDAALAQGHKLVAGEIRQQRMDAWRAACLQNPHGILCCARGGQRSHIVQRWLHDAGIDYPLVEGGYKALRQTAIQATIELAQKPIVLIGGCTGSGKTLLVQQQPNGVDLEGLARHRGSAFGRTLQPQLSQASFENLLAAEMLKTDAHQDLRLWVLEDESRMIGSNHLPECLRERMTQATIAVVEDPFEIRLERLNEEYFLRMHHDFTHAYGDEQGWQEYCEYLHHGLSAIKRRLGLQRYNELAARLDAALTTQLTTGSTDGHLAWLVPLLEEYYDPMYRYQLEKKAEKVVFHGEWAEVAEWVKTQ.

Residues 14–137 (LIADTPIIDV…LRQTAIQATI (124 aa)) enclose the Rhodanese domain. C97 (S-selanylcysteine intermediate) is an active-site residue.

Belongs to the SelU family. Monomer.

It carries out the reaction 5-methylaminomethyl-2-thiouridine(34) in tRNA + selenophosphate + (2E)-geranyl diphosphate + H2O + H(+) = 5-methylaminomethyl-2-selenouridine(34) in tRNA + (2E)-thiogeraniol + phosphate + diphosphate. It catalyses the reaction 5-methylaminomethyl-2-thiouridine(34) in tRNA + (2E)-geranyl diphosphate = 5-methylaminomethyl-S-(2E)-geranyl-thiouridine(34) in tRNA + diphosphate. The catalysed reaction is 5-methylaminomethyl-S-(2E)-geranyl-thiouridine(34) in tRNA + selenophosphate + H(+) = 5-methylaminomethyl-2-(Se-phospho)selenouridine(34) in tRNA + (2E)-thiogeraniol. The enzyme catalyses 5-methylaminomethyl-2-(Se-phospho)selenouridine(34) in tRNA + H2O = 5-methylaminomethyl-2-selenouridine(34) in tRNA + phosphate. Its function is as follows. Involved in the post-transcriptional modification of the uridine at the wobble position (U34) of tRNA(Lys), tRNA(Glu) and tRNA(Gln). Catalyzes the conversion of 2-thiouridine (S2U-RNA) to 2-selenouridine (Se2U-RNA). Acts in a two-step process involving geranylation of 2-thiouridine (S2U) to S-geranyl-2-thiouridine (geS2U) and subsequent selenation of the latter derivative to 2-selenouridine (Se2U) in the tRNA chain. This chain is tRNA 2-selenouridine synthase, found in Escherichia coli O127:H6 (strain E2348/69 / EPEC).